Consider the following 216-residue polypeptide: DNA replication complex GINS protein PSF3 (216 aa).

Residues 1 to 16 (MSEAYFRVESGALGPE) are not essential for folding and stability of GINS complex, but may regulate accessibility to the central complex pore.

The protein belongs to the GINS3/PSF3 family. Component of the GINS complex which is a heterotetramer of GINS1, GINS2, GINS3 and GINS4. Forms a stable subcomplex with GINS2. GINS complex interacts with DNA primase in vitro. Component of the CMG helicase complex, a hexameric ring of related MCM2-7 subunits stabilized by CDC45 and the tetrameric GINS complex.

Its subcellular location is the nucleus. The protein localises to the chromosome. Required for correct functioning of the GINS complex, a complex that plays an essential role in the initiation of DNA replication, and progression of DNA replication forks. GINS complex is a core component of CDC45-MCM-GINS (CMG) helicase, the molecular machine that unwinds template DNA during replication, and around which the replisome is built. The chain is DNA replication complex GINS protein PSF3 (GINS3) from Pongo abelii (Sumatran orangutan).